Here is a 210-residue protein sequence, read N- to C-terminus: Cytochrome c4 (210 aa).

Positions 1–20 (MNKALVTLLLTLGITGLAHA) are cleaved as a signal peptide. Residues C34, C37, H38, M86, C139, C142, H143, and M187 each contribute to the heme c site.

Post-translationally, binds 2 heme c groups covalently per subunit.

It localises to the periplasm. In terms of biological role, diheme, high potential cytochrome c believed to be an intermediate electron donor to terminal oxidation systems. This chain is Cytochrome c4 (cycA), found in Azotobacter vinelandii.